The chain runs to 459 residues: Bifunctional protein GlmU (459 aa).

Positions 1-229 (MSNFAIILAA…FDESLGVNDR (229 aa)) are pyrophosphorylase. Residues 8-11 (LAAG), Lys-22, Gln-72, and 77-78 (GT) each bind UDP-N-acetyl-alpha-D-glucosamine. Asp-102 contacts Mg(2+). UDP-N-acetyl-alpha-D-glucosamine is bound by residues Gly-139, Glu-154, Asn-169, and Asn-227. Position 227 (Asn-227) interacts with Mg(2+). The segment at 230–250 (VALATAESVMRRRINHKHMVN) is linker. Residues 251–459 (GVSFVNPEAT…TRLPHHPKNQ (209 aa)) form an N-acetyltransferase region. The UDP-N-acetyl-alpha-D-glucosamine site is built by Arg-332 and Lys-350. His-362 functions as the Proton acceptor in the catalytic mechanism. 2 residues coordinate UDP-N-acetyl-alpha-D-glucosamine: Tyr-365 and Asn-376. Acetyl-CoA-binding positions include Ala-379, 385-386 (NY), Ser-404, Ala-422, and Arg-439.

The protein in the N-terminal section; belongs to the N-acetylglucosamine-1-phosphate uridyltransferase family. It in the C-terminal section; belongs to the transferase hexapeptide repeat family. Homotrimer. Requires Mg(2+) as cofactor.

It localises to the cytoplasm. It catalyses the reaction alpha-D-glucosamine 1-phosphate + acetyl-CoA = N-acetyl-alpha-D-glucosamine 1-phosphate + CoA + H(+). The enzyme catalyses N-acetyl-alpha-D-glucosamine 1-phosphate + UTP + H(+) = UDP-N-acetyl-alpha-D-glucosamine + diphosphate. The protein operates within nucleotide-sugar biosynthesis; UDP-N-acetyl-alpha-D-glucosamine biosynthesis; N-acetyl-alpha-D-glucosamine 1-phosphate from alpha-D-glucosamine 6-phosphate (route II): step 2/2. It participates in nucleotide-sugar biosynthesis; UDP-N-acetyl-alpha-D-glucosamine biosynthesis; UDP-N-acetyl-alpha-D-glucosamine from N-acetyl-alpha-D-glucosamine 1-phosphate: step 1/1. Its pathway is bacterial outer membrane biogenesis; LPS lipid A biosynthesis. In terms of biological role, catalyzes the last two sequential reactions in the de novo biosynthetic pathway for UDP-N-acetylglucosamine (UDP-GlcNAc). The C-terminal domain catalyzes the transfer of acetyl group from acetyl coenzyme A to glucosamine-1-phosphate (GlcN-1-P) to produce N-acetylglucosamine-1-phosphate (GlcNAc-1-P), which is converted into UDP-GlcNAc by the transfer of uridine 5-monophosphate (from uridine 5-triphosphate), a reaction catalyzed by the N-terminal domain. In Streptococcus pneumoniae (strain Hungary19A-6), this protein is Bifunctional protein GlmU.